The chain runs to 151 residues: Macrodomain Ter protein (151 aa).

It belongs to the MatP family. In terms of assembly, homodimer.

The protein localises to the cytoplasm. Functionally, required for spatial organization of the terminus region of the chromosome (Ter macrodomain) during the cell cycle. Prevents early segregation of duplicated Ter macrodomains during cell division. Binds specifically to matS, which is a 13 bp signature motif repeated within the Ter macrodomain. This is Macrodomain Ter protein from Enterobacter sp. (strain 638).